We begin with the raw amino-acid sequence, 460 residues long: Jacalin-related lectin 36 (460 aa).

A Jacalin-type lectin 1 domain is found at M1–P131. Position 2 is an N-acetylalanine (A2). Disordered stretches follow at residues Y34–S57, P133–G162, and S291–G334. A compositionally biased stretch (low complexity) spans P133–S143. The region spanning A145–P289 is the Jacalin-type lectin 2 domain. The span at G292 to G309 shows a compositional bias: polar residues. Residues A313–P457 form the Jacalin-type lectin 3 domain.

The protein belongs to the jacalin lectin family.

The polypeptide is Jacalin-related lectin 36 (JAL36) (Arabidopsis thaliana (Mouse-ear cress)).